We begin with the raw amino-acid sequence, 619 residues long: 4-hydroxyphenylalkanoate adenylyltransferase (619 aa).

It belongs to the ATP-dependent AMP-binding enzyme family.

It carries out the reaction 17-(4-hydroxyphenyl)heptadecanoate + holo-[(phenol)carboxyphthiodiolenone synthase] + ATP = 17-(4-hydroxyphenyl)heptadecanoyl-[(phenol)carboxyphthiodiolenone synthase] + AMP + diphosphate. The enzyme catalyses 19-(4-hydroxyphenyl)nonadecanoate + holo-[(phenol)carboxyphthiodiolenone synthase] + ATP = 19-(4-hydroxyphenyl)nonadecanoyl-[(phenol)carboxyphthiodiolenone synthase] + AMP + diphosphate. Its pathway is lipid metabolism; fatty acid biosynthesis. Catalyzes the activation of long-chain fatty acids as acyl-adenylates (acyl-AMP), which are then transferred to the multifunctional polyketide synthase PpsA for further chain extension. Involved in the biosynthesis of phenolphthiocerol, which is an important intermediate in the biosynthesis of phenolic glycolipid (PGL), also called mycosid B. This Mycobacterium bovis (strain ATCC BAA-935 / AF2122/97) protein is 4-hydroxyphenylalkanoate adenylyltransferase (fadD29).